Here is a 136-residue protein sequence, read N- to C-terminus: Large ribosomal subunit protein uL16 (136 aa).

Belongs to the universal ribosomal protein uL16 family. Part of the 50S ribosomal subunit.

In terms of biological role, binds 23S rRNA and is also seen to make contacts with the A and possibly P site tRNAs. This Psychromonas ingrahamii (strain DSM 17664 / CCUG 51855 / 37) protein is Large ribosomal subunit protein uL16.